A 218-amino-acid chain; its full sequence is Glutathione S-transferase Mu 2 (218 aa).

The 87-residue stretch at 2–88 folds into the GST N-terminal domain; that stretch reads PIILGYWNIR…YIARKHNLCG (87 aa). 7–8 lines the glutathione pocket; it reads YW. Residues Ser-27 and Ser-44 each carry the phosphoserine modification. Residues 43 to 46, Lys-50, 59 to 60, and 72 to 73 contribute to the glutathione site; these read RSQW, NL, and QS. The region spanning 90 to 208 is the GST C-terminal domain; that stretch reads TEKEKIQEDI…KSSRFLPRPV (119 aa). Tyr-116 provides a ligand contact to substrate.

This sequence belongs to the GST superfamily. Mu family. As to quaternary structure, homodimer.

It localises to the cytoplasm. The enzyme catalyses RX + glutathione = an S-substituted glutathione + a halide anion + H(+). It carries out the reaction 11(S)-hydroxy-14(S),15(S)-epoxy-(5Z,8Z,12E)-eicosatrienoate + glutathione = (11S,15S)-dihydroxy-14(R)-S-glutathionyl-(5Z,8Z,12E)-eicosatrienoate. Functionally, conjugation of reduced glutathione to a wide number of exogenous and endogenous hydrophobic electrophiles. Participates in the formation of novel hepoxilin regioisomers. In Pongo abelii (Sumatran orangutan), this protein is Glutathione S-transferase Mu 2 (GSTM2).